Consider the following 377-residue polypeptide: MTKKRVALIFGGNSSEHDVSKRSAQNFYNAIEATDKYEIIVFAIAQNGFFLDTESSKKILALEDEQPIVDAFMKTVDTSDPLARIHALKSAGDFDIFFPVVHGNLGEDGTLQGLFKLLDKPYVGAPLRGHAVSFDKALTKELLTVNGIRNTKYIVVDPESANNWSWDKIVAELGNIVFVKAANQGSSVGISRVTNAEEYTEALSDSFQYDYKVLIEEAVNGARELEVGVIGNDQPLVSEIGAHTVPNQGSGDGWYDYNNKFVDNSAVHFEIPAQLSPEVTKEVKQMALDAYKVLNLRGEARMDFLLDENNVPYLGEPNTLPGFTNMSLFKRLWDYSDINNAKLVDMLIDYGFEDFAQNKKLSYSFVSLGEEKIGKFN.

The region spanning Lys-140–Asp-349 is the ATP-grasp domain. Residue Val-170 to Leu-225 coordinates ATP. The Mg(2+) site is built by Asp-303, Glu-316, and Asn-318.

It belongs to the D-alanine--D-alanine ligase family. Mg(2+) is required as a cofactor. It depends on Mn(2+) as a cofactor.

The protein localises to the cytoplasm. It catalyses the reaction 2 D-alanine + ATP = D-alanyl-D-alanine + ADP + phosphate + H(+). Its pathway is cell wall biogenesis; peptidoglycan biosynthesis. Functionally, cell wall formation. This is D-alanine--D-alanine ligase from Leuconostoc mesenteroides.